The primary structure comprises 534 residues: CTP synthase (534 aa).

Residues 1–267 form an amidoligase domain region; it reads MTKYIFVTGG…DQIVCDHLKL (267 aa). A CTP-binding site is contributed by S13. Residue S13 participates in UTP binding. Residue 14 to 19 participates in ATP binding; sequence SIGKGI. Y54 lines the L-glutamine pocket. D71 contributes to the ATP binding site. Residues D71 and E141 each contribute to the Mg(2+) site. Residues 148–150, 188–193, and K224 each bind CTP; these read DIE and KTKPTQ. UTP is bound by residues 188–193 and K224; that span reads KTKPTQ. ATP is bound at residue 240–242; the sequence is RDV. The Glutamine amidotransferase type-1 domain maps to 292–534; that stretch reads KIALVGKYVE…FVTAAIKNSN (243 aa). G354 lines the L-glutamine pocket. The active-site Nucleophile; for glutamine hydrolysis is C381. Residues 382 to 385, E405, and R463 each bind L-glutamine; that span reads LGMQ. Active-site residues include H508 and E510.

This sequence belongs to the CTP synthase family. As to quaternary structure, homotetramer.

The enzyme catalyses UTP + L-glutamine + ATP + H2O = CTP + L-glutamate + ADP + phosphate + 2 H(+). It catalyses the reaction L-glutamine + H2O = L-glutamate + NH4(+). The catalysed reaction is UTP + NH4(+) + ATP = CTP + ADP + phosphate + 2 H(+). It functions in the pathway pyrimidine metabolism; CTP biosynthesis via de novo pathway; CTP from UDP: step 2/2. With respect to regulation, allosterically activated by GTP, when glutamine is the substrate; GTP has no effect on the reaction when ammonia is the substrate. The allosteric effector GTP functions by stabilizing the protein conformation that binds the tetrahedral intermediate(s) formed during glutamine hydrolysis. Inhibited by the product CTP, via allosteric rather than competitive inhibition. In terms of biological role, catalyzes the ATP-dependent amination of UTP to CTP with either L-glutamine or ammonia as the source of nitrogen. Regulates intracellular CTP levels through interactions with the four ribonucleotide triphosphates. This chain is CTP synthase, found in Streptococcus pyogenes serotype M2 (strain MGAS10270).